The primary structure comprises 500 residues: Carnosic acid synthase (500 aa).

Residues 4 to 24 (LILLSLAFLASCVVAYSRRRP) traverse the membrane as a helical segment. Cys443 is a binding site for heme.

The protein belongs to the cytochrome P450 family. Heme serves as cofactor. As to expression, mostly expressed in young leaves, particularly in glandular trichomes.

The protein localises to the membrane. The catalysed reaction is 11-hydroxyferruginol + 3 reduced [NADPH--hemoprotein reductase] + 3 O2 = carnosate + 3 oxidized [NADPH--hemoprotein reductase] + 4 H2O + 4 H(+). The enzyme catalyses miltiradiene + 2 reduced [NADPH--hemoprotein reductase] + 2 O2 = miltiradien-20-al + 2 oxidized [NADPH--hemoprotein reductase] + 3 H2O + 2 H(+). It catalyses the reaction ferruginol + 3 reduced [NADPH--hemoprotein reductase] + 3 O2 = pisiferate + 3 oxidized [NADPH--hemoprotein reductase] + 4 H2O + 4 H(+). The protein operates within secondary metabolite biosynthesis; terpenoid biosynthesis. Functionally, monooxygenase involved in the biosynthesis of carnosate, a potent antioxidant labdane-related diterpene natural product. Catalyzes the oxidation of 11-hydroxyferruginol to produce carnosate. Mediates the conversion of miltiradien into miltiradien-20-al. Also involved in the production of pisiferic acid and derivative products from ferruginol. In Salvia fruticosa (Greek sage), this protein is Carnosic acid synthase.